We begin with the raw amino-acid sequence, 431 residues long: Levansucrase LscB (431 aa).

The sucrose site is built by tryptophan 61, aspartate 62, alanine 148, arginine 218, and aspartate 219. Aspartate 62 (nucleophile) is an active-site residue. The Proton donor/acceptor role is filled by glutamate 303.

The protein belongs to the glycosyl hydrolase 68 family.

The protein resides in the secreted. The enzyme catalyses [6)-beta-D-fructofuranosyl-(2-&gt;](n) alpha-D-glucopyranoside + sucrose = [6)-beta-D-fructofuranosyl-(2-&gt;](n+1) alpha-D-glucopyranoside + D-glucose. Functionally, catalyzes the synthesis of levan, a fructose polymer, by transferring the fructosyl moiety from sucrose to a growing acceptor molecule. The polypeptide is Levansucrase LscB (Pseudomonas savastanoi pv. glycinea (Pseudomonas syringae pv. glycinea)).